We begin with the raw amino-acid sequence, 136 residues long: HTH-type transcriptional regulator LrpA (136 aa).

The HTH asnC-type domain maps to Ile-2 to Ser-63. A DNA-binding region (H-T-H motif) is located at residues Met-21–Val-40.

Negative regulation of glyA transcription and kinB-dependent sporulation. The sequence is that of HTH-type transcriptional regulator LrpA (lrpA) from Bacillus subtilis (strain 168).